We begin with the raw amino-acid sequence, 188 residues long: MDRERILMGVVGRPHGVRGLVRVHSYAAVPEDLTAYGALTDEHGQVWSLRWRGDGIAELRDAAGQPLSGRDAAQAMVNRRLYVARTSLPEPDQDEFYFTDLIGMDVRAQGTDAPLGRVLVVHDYGAGVSLELGGQGHAPLILPFTRACFPVVDVAAGRIEAVLPDEIEVQGDLSDKGEVEVSATGGAS.

Residues 93-175 (QDEFYFTDLI…EIEVQGDLSD (83 aa)) form the PRC barrel domain.

The protein belongs to the RimM family. In terms of assembly, binds ribosomal protein uS19.

It localises to the cytoplasm. In terms of biological role, an accessory protein needed during the final step in the assembly of 30S ribosomal subunit, possibly for assembly of the head region. Essential for efficient processing of 16S rRNA. May be needed both before and after RbfA during the maturation of 16S rRNA. It has affinity for free ribosomal 30S subunits but not for 70S ribosomes. The protein is Ribosome maturation factor RimM of Gluconacetobacter diazotrophicus (strain ATCC 49037 / DSM 5601 / CCUG 37298 / CIP 103539 / LMG 7603 / PAl5).